The following is a 157-amino-acid chain: 2-C-methyl-D-erythritol 2,4-cyclodiphosphate synthase (157 aa).

2 residues coordinate a divalent metal cation: Asp-8 and His-10. 4-CDP-2-C-methyl-D-erythritol 2-phosphate-binding positions include 8-10 (DVH) and 34-35 (HS). His-42 contributes to the a divalent metal cation binding site. 4-CDP-2-C-methyl-D-erythritol 2-phosphate is bound by residues 56–58 (DIG), 132–135 (TTNE), and Arg-142.

This sequence belongs to the IspF family. As to quaternary structure, homotrimer. A divalent metal cation serves as cofactor.

The catalysed reaction is 4-CDP-2-C-methyl-D-erythritol 2-phosphate = 2-C-methyl-D-erythritol 2,4-cyclic diphosphate + CMP. It functions in the pathway isoprenoid biosynthesis; isopentenyl diphosphate biosynthesis via DXP pathway; isopentenyl diphosphate from 1-deoxy-D-xylulose 5-phosphate: step 4/6. In terms of biological role, involved in the biosynthesis of isopentenyl diphosphate (IPP) and dimethylallyl diphosphate (DMAPP), two major building blocks of isoprenoid compounds. Catalyzes the conversion of 4-diphosphocytidyl-2-C-methyl-D-erythritol 2-phosphate (CDP-ME2P) to 2-C-methyl-D-erythritol 2,4-cyclodiphosphate (ME-CPP) with a corresponding release of cytidine 5-monophosphate (CMP). The protein is 2-C-methyl-D-erythritol 2,4-cyclodiphosphate synthase of Chlorobium phaeovibrioides (strain DSM 265 / 1930) (Prosthecochloris vibrioformis (strain DSM 265)).